Consider the following 1195-residue polypeptide: Chromosome partition protein Smc (1195 aa).

Position 33–40 (33–40) interacts with ATP; sequence PNGSGKSN. Coiled coils occupy residues 185 to 241, 273 to 348, and 380 to 528; these read GVAQ…RQEQ, DAAT…IQAL, and QYQQ…QETQ. The SMC hinge domain occupies 542-658; sequence PGVHGLVAQL…FERLDQARRY (117 aa). Positions 698–1043 form a coiled coil; the sequence is GESAEVRAIR…ELLLRIENFT (346 aa).

The protein belongs to the SMC family. As to quaternary structure, homodimer.

It localises to the cytoplasm. Its function is as follows. Required for chromosome condensation and partitioning. In Synechococcus sp. (strain ATCC 27144 / PCC 6301 / SAUG 1402/1) (Anacystis nidulans), this protein is Chromosome partition protein Smc.